The primary structure comprises 419 residues: Circumsporozoite protein (419 aa).

Positions methionine 1–glycine 23 are cleaved as a signal peptide. The interval alanine 50–asparagine 111 is disordered. Basic and acidic residues predominate over residues asparagine 65 to glutamine 95. The tract at residues lysine 81–arginine 89 is required for the binding to heparan sulfate proteoglycans (HSPGs) on the surface of host hepatocytes. The tract at residues lysine 92–proline 96 is region I; contains the proteolytic cleavage site. 38 repeat units span residues asparagine 99–glycine 102, asparagine 103–glycine 106, asparagine 107–glycine 110, asparagine 111–glycine 114, asparagine 115–glycine 118, asparagine 119–glycine 122, asparagine 123–glycine 126, asparagine 127–glycine 130, asparagine 131–glycine 134, asparagine 135–glycine 138, asparagine 139–glycine 142, asparagine 143–glycine 146, asparagine 147–glycine 150, asparagine 151–glycine 154, asparagine 155–glycine 158, asparagine 159–glycine 162, asparagine 163–glycine 166, asparagine 167–glycine 170, asparagine 171–glycine 174, asparagine 175–glycine 178, asparagine 179–glycine 182, asparagine 183–glycine 186, asparagine 187–glycine 190, asparagine 191–glycine 194, asparagine 195–glycine 198, asparagine 199–glycine 202, asparagine 203–glycine 206, asparagine 207–glycine 210, asparagine 211–glycine 214, asparagine 215–glycine 218, asparagine 219–glycine 222, asparagine 223–glycine 226, asparagine 227–glycine 230, asparagine 231–glycine 234, asparagine 235–glycine 238, asparagine 239–glycine 242, asparagine 243–glycine 246, and asparagine 247–glycine 250. The tract at residues asparagine 99 to asparagine 314 is 54 X 4 AA approximate tandem repeats of N-A-G-G. Residues glycine 146 to glycine 237 are disordered. The 39; approximate repeat unit spans residues threonine 251 to glycine 254. 13 repeat units span residues asparagine 255–glycine 258, asparagine 259–glycine 262, asparagine 263–glycine 266, asparagine 267–glycine 270, asparagine 271–glycine 274, asparagine 275–glycine 278, asparagine 279–glycine 282, asparagine 283–glycine 286, asparagine 287–glycine 290, asparagine 291–glycine 294, asparagine 295–glycine 298, asparagine 299–glycine 302, and asparagine 303–glycine 306. One copy of the 53; approximate repeat lies at asparagine 307–alanine 310. The 54; approximate repeat unit spans residues asparagine 311–asparagine 314. Residues alanine 312 to asparagine 332 form a disordered region. The 53-residue stretch at lysine 345 to alanine 397 folds into the TSP type-1 domain. Intrachain disulfides connect cysteine 357–cysteine 391 and cysteine 361–cysteine 396. Threonine 360 carries O-linked (Fuc) threonine glycosylation. Residue cysteine 396 is the site of GPI-anchor amidated cysteine attachment. A propeptide spans alanine 397–asparagine 419 (removed in mature form).

It belongs to the plasmodium circumsporozoite protein family. Post-translationally, during host cell invasion, proteolytically cleaved at the cell membrane in the region I by a papain-like cysteine protease of parasite origin. Cleavage is triggered by the sporozoite contact with highly sulfated heparan sulfate proteoglycans (HSPGs) present on the host hepatocyte cell surface. Cleavage exposes the TSP type-1 (TSR) domain and is required for productive invasion of host hepatocytes but not for adhesion to the host cell membrane. Cleavage is dispensable for sporozoite development in the oocyst, motility and for traversal of host and vector cells. O-glycosylated; maybe by POFUT2.

The protein localises to the cell membrane. The protein resides in the cytoplasm. Essential sporozoite protein. In the mosquito vector, required for sporozoite development in the oocyst, migration through the vector hemolymph and entry into the vector salivary glands. In the vertebrate host, required for sporozoite migration through the host dermis and infection of host hepatocytes. Binds to highly sulfated heparan sulfate proteoglycans (HSPGs) on the surface of host hepatocytes. Its function is as follows. In the vertebrate host, binds to highly sulfated heparan sulfate proteoglycans (HSPGs) on the surface of host hepatocytes and is required for sporozoite invasion of the host hepatocytes. This Plasmodium cynomolgi (strain Mulligan/NIH) protein is Circumsporozoite protein.